A 441-amino-acid polypeptide reads, in one-letter code: Cortexillin-2 (441 aa).

An actin-binding region spans residues 1-229 (MDLNKEWEKV…VLYTSLFFHA (229 aa)). 2 consecutive Calponin-homology (CH) domains span residues 9–117 (KVQE…RKYR) and 126–231 (KSSE…HAFR). Coiled coils occupy residues 229-362 (AFRA…RLGL) and 406-430 (SFEE…KYLN).

It belongs to the cortexillin family. Homodimer; parallel.

It localises to the cytoplasm. It is found in the cytoskeleton. Its function is as follows. Actin-bundling protein. When linked to F-actin the actin filaments form preferentially anti-parallel bundles that associate into meshworks. Plays a major role in cytokinesis. Negatively regulates cortical localization of rapgap1. The sequence is that of Cortexillin-2 (ctxB) from Dictyostelium discoideum (Social amoeba).